Here is a 299-residue protein sequence, read N- to C-terminus: Ribosomal protein L11 methyltransferase (299 aa).

The S-adenosyl-L-methionine site is built by T152, G172, D194, and N234.

This sequence belongs to the methyltransferase superfamily. PrmA family.

The protein resides in the cytoplasm. The enzyme catalyses L-lysyl-[protein] + 3 S-adenosyl-L-methionine = N(6),N(6),N(6)-trimethyl-L-lysyl-[protein] + 3 S-adenosyl-L-homocysteine + 3 H(+). In terms of biological role, methylates ribosomal protein L11. The polypeptide is Ribosomal protein L11 methyltransferase (Geobacter sulfurreducens (strain ATCC 51573 / DSM 12127 / PCA)).